Here is a 464-residue protein sequence, read N- to C-terminus: ATP-dependent protease ATPase subunit HslU (464 aa).

ATP is bound by residues Val-18, 60–65 (GVGKTE), Asp-277, Glu-342, and Arg-414.

The protein belongs to the ClpX chaperone family. HslU subfamily. A double ring-shaped homohexamer of HslV is capped on each side by a ring-shaped HslU homohexamer. The assembly of the HslU/HslV complex is dependent on binding of ATP.

It is found in the cytoplasm. Functionally, ATPase subunit of a proteasome-like degradation complex; this subunit has chaperone activity. The binding of ATP and its subsequent hydrolysis by HslU are essential for unfolding of protein substrates subsequently hydrolyzed by HslV. HslU recognizes the N-terminal part of its protein substrates and unfolds these before they are guided to HslV for hydrolysis. The sequence is that of ATP-dependent protease ATPase subunit HslU from Lactobacillus delbrueckii subsp. bulgaricus (strain ATCC 11842 / DSM 20081 / BCRC 10696 / JCM 1002 / NBRC 13953 / NCIMB 11778 / NCTC 12712 / WDCM 00102 / Lb 14).